The chain runs to 529 residues: Autophagy-related protein 21 (529 aa).

Polar residues predominate over residues 49-62 (NSLEDSAGCQNPTH). Residues 49-70 (NSLEDSAGCQNPTHSKTDSQDT) form a disordered region. WD repeat units follow at residues 271 to 311 (AHHS…GKVK) and 321 to 361 (GHNL…SDIC). Positions 318–322 (LRRGH) match the L/FRRG motif motif. Positions 362–388 (TNENSEDRTNHNSDYEDSDGDTSKSSE) are disordered. Basic and acidic residues predominate over residues 366–375 (SEDRTNHNSD).

This sequence belongs to the WD repeat PROPPIN family.

It localises to the cytoplasm. Its subcellular location is the membrane. It is found in the vacuole membrane. Functionally, required for cytoplasm to vacuole transport (Cvt) vesicles formation and mitophagy. Involved in binding of phosphatidylethanolamine to ATG8 and in recruitment of ATG8 and ATG5 to the pre-autophagosomal structure. Protects ATG8 from ARG4-mediated cleavage. The chain is Autophagy-related protein 21 (ATG21) from Candida albicans (strain SC5314 / ATCC MYA-2876) (Yeast).